The following is a 404-amino-acid chain: Probable cysteine desulfurase (404 aa).

Residue lysine 226 is modified to N6-(pyridoxal phosphate)lysine. The active-site Cysteine persulfide intermediate is the cysteine 363.

It belongs to the class-V pyridoxal-phosphate-dependent aminotransferase family. Csd subfamily. The cofactor is pyridoxal 5'-phosphate.

It catalyses the reaction (sulfur carrier)-H + L-cysteine = (sulfur carrier)-SH + L-alanine. Catalyzes the removal of elemental sulfur and selenium atoms from L-cysteine, L-cystine, L-selenocysteine, and L-selenocystine to produce L-alanine. This chain is Probable cysteine desulfurase (csd), found in Vibrio cholerae serotype O1 (strain ATCC 39315 / El Tor Inaba N16961).